The sequence spans 222 residues: Nucleoside triphosphate pyrophosphatase (222 aa).

D82 functions as the Proton acceptor in the catalytic mechanism.

Belongs to the Maf family. Requires a divalent metal cation as cofactor.

It localises to the cytoplasm. It catalyses the reaction a ribonucleoside 5'-triphosphate + H2O = a ribonucleoside 5'-phosphate + diphosphate + H(+). The enzyme catalyses a 2'-deoxyribonucleoside 5'-triphosphate + H2O = a 2'-deoxyribonucleoside 5'-phosphate + diphosphate + H(+). Its function is as follows. Nucleoside triphosphate pyrophosphatase. May have a dual role in cell division arrest and in preventing the incorporation of modified nucleotides into cellular nucleic acids. The polypeptide is Nucleoside triphosphate pyrophosphatase (Mycobacterium bovis (strain ATCC BAA-935 / AF2122/97)).